The following is a 192-amino-acid chain: Peptidyl-tRNA hydrolase (192 aa).

His17 is a tRNA binding site. His22 functions as the Proton acceptor in the catalytic mechanism. 3 residues coordinate tRNA: Phe68, Asn70, and Asn116.

This sequence belongs to the PTH family. As to quaternary structure, monomer.

The protein localises to the cytoplasm. It catalyses the reaction an N-acyl-L-alpha-aminoacyl-tRNA + H2O = an N-acyl-L-amino acid + a tRNA + H(+). Its function is as follows. Hydrolyzes ribosome-free peptidyl-tRNAs (with 1 or more amino acids incorporated), which drop off the ribosome during protein synthesis, or as a result of ribosome stalling. Catalyzes the release of premature peptidyl moieties from peptidyl-tRNA molecules trapped in stalled 50S ribosomal subunits, and thus maintains levels of free tRNAs and 50S ribosomes. In Xylella fastidiosa (strain 9a5c), this protein is Peptidyl-tRNA hydrolase.